Reading from the N-terminus, the 456-residue chain is Chitobiosyldiphosphodolichol beta-mannosyltransferase (456 aa).

Residues 1-22 lie on the Lumenal side of the membrane; the sequence is MGEIIKYKGFDHVWQYSGPWLY. The helical transmembrane segment at 23–43 threads the bilayer; that stretch reads CLIGIYISLPVLAYHILPWIF. Residues 44 to 103 are Cytoplasmic-facing; sequence HKNRSNKRKTISIFVLGDLGHSPRMCYHASSFSKLDYYVNLCGYVETEPSHQIVDDVNID. An intramembrane region (helical) is located at residues 104–124; sequence IIPIEAIKNTNNLPYIMFAIL. Topologically, residues 125–456 are cytoplasmic; it reads KVVRQCGKIW…TFSSIFENKS (332 aa).

This sequence belongs to the glycosyltransferase group 1 family.

The protein resides in the endoplasmic reticulum membrane. The enzyme catalyses an N,N'-diacetylchitobiosyl-diphospho-di-trans,poly-cis-dolichol + GDP-alpha-D-mannose = a beta-D-Man-(1-&gt;4)-beta-D-GlcNAc-(1-&gt;4)-alpha-D-GlcNAc-diphospho-di-trans,poly-cis-dolichol + GDP + H(+). The protein operates within protein modification; protein glycosylation. Functionally, participates in the formation of the lipid-linked precursor oligosaccharide for N-glycosylation. Involved in assembling the dolichol-pyrophosphate-GlcNAc(2)-Man(5) intermediate on the cytoplasmic surface of the ER. This chain is Chitobiosyldiphosphodolichol beta-mannosyltransferase (ALG1), found in Candida albicans (strain SC5314 / ATCC MYA-2876) (Yeast).